A 530-amino-acid polypeptide reads, in one-letter code: Potassium voltage-gated channel subfamily A member 6 (530 aa).

Residues 1-35 (MRSEKSLTLAAPGEVRGPEGEQQDAGEFQEAEGGG) are disordered. Phosphoserine is present on serine 3. Residues 21–30 (EQQDAGEFQE) are compositionally biased toward acidic residues. A helical transmembrane segment spans residues 172-193 (PARGIAIVSVLVILISIVIFCL). The disordered stretch occupies residues 203–239 (GRGGSNEGSGTRMSPASRGSHEEEDEDEDSYAFPGSI). Position 222 is a phosphoserine; by CK2 (serine 222). The helical transmembrane segment at 264-285 (FFLVETLCIVWFTFELLVRFSA) threads the bilayer. Cysteine 286 carries the S-palmitoyl cysteine lipid modification. Residues 297–317 (MNIIDLVAIFPYFITLGTELV) form a helical membrane-spanning segment. The helical; Voltage-sensor transmembrane segment at 339–359 (LAILRVIRLVRVFRIFKLSRH) threads the bilayer. The tract at residues 361 to 374 (KGLQILGKTLQASM) is S4-S5 linker. The chain crosses the membrane as a helical span at residues 375 to 396 (RELGLLIFFLFIGVILFSSAVY). Residues 411–422 (PDAFWWAVVTMT) constitute an intramembrane region (helical). The Selectivity filter motif lies at 423–428 (TVGYGD). The stretch at 423-430 (TVGYGDMY) is an intramembrane region. A helical transmembrane segment spans residues 438 to 466 (IVGSLCAIAGVLTIALPVPVIVSNFNYFY). Position 512 is a phosphoserine; by PKA (serine 512). Residues 527–529 (LTE) carry the PDZ-binding motif. Phosphothreonine; by PKA is present on threonine 528.

Belongs to the potassium channel family. A (Shaker) (TC 1.A.1.2) subfamily. Kv1.6/KCNA6 sub-subfamily. As to quaternary structure, homotetramer and heterotetramer of potassium channel proteins. Interacts with KCNAB1 and KCNAB2.

Its subcellular location is the cell membrane. The enzyme catalyses K(+)(in) = K(+)(out). Voltage-gated potassium channel that mediates transmembrane potassium transport in excitable membranes. Forms tetrameric potassium-selective channels through which potassium ions pass in accordance with their electrochemical gradient. The channel alternates between opened and closed conformations in response to the voltage difference across the membrane. Can form functional homotetrameric channels and heterotetrameric channels that contain variable proportions of KCNA1, KCNA2, KCNA4, KNCA5, KCNA6, and possibly other family members as well; channel properties depend on the type of alpha subunits that are part of the channel. Channel properties are modulated by cytoplasmic beta subunits that regulate the subcellular location of the alpha subunits and promote rapid inactivation. Homotetrameric channels display rapid activation and slow inactivation. This chain is Potassium voltage-gated channel subfamily A member 6 (Kcna6), found in Rattus norvegicus (Rat).